A 219-amino-acid chain; its full sequence is Octanoyltransferase (219 aa).

The region spanning 31–219 is the BPL/LPL catalytic domain; the sequence is EDLPGFLVFC…KLKRRLLEVL (189 aa). Residues 69-76, 153-155, and 166-168 each bind substrate; these read RGGRATYH, SVG, and GAA. C184 functions as the Acyl-thioester intermediate in the catalytic mechanism.

This sequence belongs to the LipB family.

The protein localises to the cytoplasm. The catalysed reaction is octanoyl-[ACP] + L-lysyl-[protein] = N(6)-octanoyl-L-lysyl-[protein] + holo-[ACP] + H(+). Its pathway is protein modification; protein lipoylation via endogenous pathway; protein N(6)-(lipoyl)lysine from octanoyl-[acyl-carrier-protein]: step 1/2. Functionally, catalyzes the transfer of endogenously produced octanoic acid from octanoyl-acyl-carrier-protein onto the lipoyl domains of lipoate-dependent enzymes. Lipoyl-ACP can also act as a substrate although octanoyl-ACP is likely to be the physiological substrate. This Bdellovibrio bacteriovorus (strain ATCC 15356 / DSM 50701 / NCIMB 9529 / HD100) protein is Octanoyltransferase.